Consider the following 452-residue polypeptide: Probable cytosolic iron-sulfur protein assembly protein 1 (452 aa).

A compositionally biased stretch (pro residues) spans 1-12 (MPPPTTPTPNPS). Residues 1 to 24 (MPPPTTPTPNPSIPQKATLTPLPP) are disordered. 6 WD repeats span residues 70–121 (GHAR…DAAA), 161–200 (GHEN…QGGD), 213–267 (EHDG…EWVC), 273–319 (GHGG…FGGV), 340–379 (VHTR…EDVA), and 411–452 (YEVN…VRIS).

Belongs to the WD repeat CIA1 family.

Essential component of the cytosolic iron-sulfur (Fe/S) protein assembly machinery. Required for the maturation of extramitochondrial Fe/S proteins. This is Probable cytosolic iron-sulfur protein assembly protein 1 from Chaetomium globosum (strain ATCC 6205 / CBS 148.51 / DSM 1962 / NBRC 6347 / NRRL 1970) (Soil fungus).